Consider the following 432-residue polypeptide: Crenactin (432 aa).

Residues 20–24 (TSYVK), 182–184 (GGH), 235–239 (EVVKR), 354–358 (GAFSW), and Gln-399 contribute to the ATP site.

It belongs to the actin family. Monomer. The crenactin monomers polymerize into right-handed helical filaments, with 8 subunits per complete turn of the helix. Forms single-stranded filaments under high salt concentrations and double-stranded filaments under low salt concentrations. Interacts with arcadin-1 and arcadin-2.

It localises to the cytoplasm. It is found in the cytoskeleton. The enzyme catalyses ATP + H2O = ADP + phosphate + H(+). With respect to regulation, crenactin polymerization is inhibited by interaction with arcadin-2. Also significantly inhibited by elevated antibiotic A22 concentrations. Its function is as follows. Forms the backbone of an actin-like archaeal cytoskeleton, which is involved in cell shape determination. Has ATPase activity. Shows highest activity towards ATP or GTP as nucleotide, and only residual activity on UTP, CTP and dNTPs. This is Crenactin from Pyrobaculum calidifontis (strain DSM 21063 / JCM 11548 / VA1).